The chain runs to 612 residues: UvrABC system protein C (612 aa).

The GIY-YIG domain occupies 20–98 (THSGVYRMLD…IKQHRPKYNI (79 aa)). The UVR domain maps to 208 to 243 (SSVLEEISAKMYQASEDMEYEKAQVYRDQLVILRKL).

It belongs to the UvrC family. Interacts with UvrB in an incision complex.

It is found in the cytoplasm. In terms of biological role, the UvrABC repair system catalyzes the recognition and processing of DNA lesions. UvrC both incises the 5' and 3' sides of the lesion. The N-terminal half is responsible for the 3' incision and the C-terminal half is responsible for the 5' incision. The polypeptide is UvrABC system protein C (Francisella philomiragia subsp. philomiragia (strain ATCC 25017 / CCUG 19701 / FSC 153 / O#319-036)).